Consider the following 71-residue polypeptide: UPF0437 protein asl1434 (71 aa).

Belongs to the UPF0437 family.

The chain is UPF0437 protein asl1434 from Nostoc sp. (strain PCC 7120 / SAG 25.82 / UTEX 2576).